The sequence spans 226 residues: Putative methyltransferase RP459 (226 aa).

The protein belongs to the methyltransferase superfamily.

This chain is Putative methyltransferase RP459, found in Rickettsia prowazekii (strain Madrid E).